The primary structure comprises 274 residues: Thiamine kinase (274 aa).

It belongs to the thiamine kinase family.

The catalysed reaction is thiamine + ATP = thiamine phosphate + ADP + H(+). It functions in the pathway cofactor biosynthesis; thiamine diphosphate biosynthesis; thiamine phosphate from thiamine: step 1/1. Functionally, catalyzes the ATP-dependent phosphorylation of thiamine to thiamine phosphate. Is involved in thiamine salvage. This Escherichia coli O139:H28 (strain E24377A / ETEC) protein is Thiamine kinase.